A 128-amino-acid chain; its full sequence is Small ribosomal subunit protein uS11 (128 aa).

The protein belongs to the universal ribosomal protein uS11 family. In terms of assembly, part of the 30S ribosomal subunit. Interacts with proteins S7 and S18. Binds to IF-3.

Located on the platform of the 30S subunit, it bridges several disparate RNA helices of the 16S rRNA. Forms part of the Shine-Dalgarno cleft in the 70S ribosome. The sequence is that of Small ribosomal subunit protein uS11 from Vesicomyosocius okutanii subsp. Calyptogena okutanii (strain HA).